A 247-amino-acid polypeptide reads, in one-letter code: UPF0280 protein Mevan_0550 (247 aa).

It belongs to the UPF0280 family.

The chain is UPF0280 protein Mevan_0550 from Methanococcus vannielii (strain ATCC 35089 / DSM 1224 / JCM 13029 / OCM 148 / SB).